Consider the following 152-residue polypeptide: Ribosome maturation factor RimP (152 aa).

This sequence belongs to the RimP family.

The protein localises to the cytoplasm. Required for maturation of 30S ribosomal subunits. The chain is Ribosome maturation factor RimP from Pseudothermotoga lettingae (strain ATCC BAA-301 / DSM 14385 / NBRC 107922 / TMO) (Thermotoga lettingae).